Reading from the N-terminus, the 254-residue chain is 4-hydroxy-tetrahydrodipicolinate reductase (254 aa).

NAD(+) is bound by residues 8 to 13, 87 to 89, and 111 to 114; these read GASGKM, GTT, and ATNM. The active-site Proton donor/acceptor is the histidine 143. Histidine 144 is a binding site for (S)-2,3,4,5-tetrahydrodipicolinate. Lysine 147 acts as the Proton donor in catalysis. Position 153 to 154 (153 to 154) interacts with (S)-2,3,4,5-tetrahydrodipicolinate; the sequence is GT.

The protein belongs to the DapB family.

The protein localises to the cytoplasm. It catalyses the reaction (S)-2,3,4,5-tetrahydrodipicolinate + NAD(+) + H2O = (2S,4S)-4-hydroxy-2,3,4,5-tetrahydrodipicolinate + NADH + H(+). The enzyme catalyses (S)-2,3,4,5-tetrahydrodipicolinate + NADP(+) + H2O = (2S,4S)-4-hydroxy-2,3,4,5-tetrahydrodipicolinate + NADPH + H(+). The protein operates within amino-acid biosynthesis; L-lysine biosynthesis via DAP pathway; (S)-tetrahydrodipicolinate from L-aspartate: step 4/4. Functionally, catalyzes the conversion of 4-hydroxy-tetrahydrodipicolinate (HTPA) to tetrahydrodipicolinate. The protein is 4-hydroxy-tetrahydrodipicolinate reductase of Campylobacter fetus subsp. fetus (strain 82-40).